Consider the following 1054-residue polypeptide: Probable sucrose-phosphate synthase 1 (1054 aa).

A compositionally biased stretch (basic and acidic residues) spans 104–115 (RLERERGRREAV). Disordered regions lie at residues 104 to 125 (RLER…LSEG), 674 to 693 (LRNE…SDSL), and 708 to 727 (DGDK…DDRA).

It belongs to the glycosyltransferase 1 family. Homodimer or homotetramer.

The enzyme catalyses beta-D-fructose 6-phosphate + UDP-alpha-D-glucose = sucrose 6(F)-phosphate + UDP + H(+). It functions in the pathway glycan biosynthesis; sucrose biosynthesis; sucrose from D-fructose 6-phosphate and UDP-alpha-D-glucose: step 1/2. With respect to regulation, activity is regulated by phosphorylation and moderated by concentration of metabolites and light. Its function is as follows. Plays a role in photosynthetic sucrose synthesis by catalyzing the rate-limiting step of sucrose biosynthesis from UDP-glucose and fructose- 6-phosphate. Involved in the regulation of carbon partitioning in the leaves of plants. May regulate the synthesis of sucrose and therefore play a major role as a limiting factor in the export of photoassimilates out of the leaf. Plays a role for sucrose availability that is essential for plant growth and fiber elongation. This chain is Probable sucrose-phosphate synthase 1 (SPS1), found in Craterostigma plantagineum (Blue gem).